The sequence spans 381 residues: Alkanesulfonate monooxygenase (381 aa).

This sequence belongs to the SsuD family. In terms of assembly, homotetramer.

It carries out the reaction an alkanesulfonate + FMNH2 + O2 = an aldehyde + FMN + sulfite + H2O + 2 H(+). Its function is as follows. Catalyzes the desulfonation of aliphatic sulfonates. In Escherichia coli O127:H6 (strain E2348/69 / EPEC), this protein is Alkanesulfonate monooxygenase.